We begin with the raw amino-acid sequence, 145 residues long: Ribosome maturation factor RimP (145 aa).

The protein belongs to the RimP family.

It is found in the cytoplasm. Functionally, required for maturation of 30S ribosomal subunits. The protein is Ribosome maturation factor RimP of Borreliella burgdorferi (strain ZS7) (Borrelia burgdorferi).